The chain runs to 156 residues: Small ribosomal subunit protein uS7 (156 aa).

Belongs to the universal ribosomal protein uS7 family. Part of the 30S ribosomal subunit. Contacts proteins S9 and S11.

In terms of biological role, one of the primary rRNA binding proteins, it binds directly to 16S rRNA where it nucleates assembly of the head domain of the 30S subunit. Is located at the subunit interface close to the decoding center, probably blocks exit of the E-site tRNA. This Gloeobacter violaceus (strain ATCC 29082 / PCC 7421) protein is Small ribosomal subunit protein uS7.